The primary structure comprises 358 residues: UDP-N-acetylglucosamine--N-acetylmuramyl-(pentapeptide) pyrophosphoryl-undecaprenol N-acetylglucosamine transferase (358 aa).

UDP-N-acetyl-alpha-D-glucosamine-binding positions include 11–13, Asn-120, Arg-161, Ser-188, and Gln-282; that span reads TGG.

It belongs to the glycosyltransferase 28 family. MurG subfamily.

Its subcellular location is the cell inner membrane. The catalysed reaction is di-trans,octa-cis-undecaprenyl diphospho-N-acetyl-alpha-D-muramoyl-L-alanyl-D-glutamyl-meso-2,6-diaminopimeloyl-D-alanyl-D-alanine + UDP-N-acetyl-alpha-D-glucosamine = di-trans,octa-cis-undecaprenyl diphospho-[N-acetyl-alpha-D-glucosaminyl-(1-&gt;4)]-N-acetyl-alpha-D-muramoyl-L-alanyl-D-glutamyl-meso-2,6-diaminopimeloyl-D-alanyl-D-alanine + UDP + H(+). The protein operates within cell wall biogenesis; peptidoglycan biosynthesis. Its function is as follows. Cell wall formation. Catalyzes the transfer of a GlcNAc subunit on undecaprenyl-pyrophosphoryl-MurNAc-pentapeptide (lipid intermediate I) to form undecaprenyl-pyrophosphoryl-MurNAc-(pentapeptide)GlcNAc (lipid intermediate II). The polypeptide is UDP-N-acetylglucosamine--N-acetylmuramyl-(pentapeptide) pyrophosphoryl-undecaprenol N-acetylglucosamine transferase (Synechococcus sp. (strain CC9311)).